The following is a 162-amino-acid chain: Phosphopantetheine adenylyltransferase (162 aa).

Residue threonine 9 participates in substrate binding. ATP contacts are provided by residues 9–10 and histidine 17; that span reads TF. The substrate site is built by lysine 41, leucine 73, and arginine 87. Residues 88–90, glutamate 98, and 123–129 each bind ATP; these read GLR and LSYISSS.

It belongs to the bacterial CoaD family. As to quaternary structure, homohexamer. The cofactor is Mg(2+).

It localises to the cytoplasm. The enzyme catalyses (R)-4'-phosphopantetheine + ATP + H(+) = 3'-dephospho-CoA + diphosphate. The protein operates within cofactor biosynthesis; coenzyme A biosynthesis; CoA from (R)-pantothenate: step 4/5. Its function is as follows. Reversibly transfers an adenylyl group from ATP to 4'-phosphopantetheine, yielding dephospho-CoA (dPCoA) and pyrophosphate. This Teredinibacter turnerae (strain ATCC 39867 / T7901) protein is Phosphopantetheine adenylyltransferase.